A 180-amino-acid chain; its full sequence is Large ribosomal subunit protein uL6 (180 aa).

The protein belongs to the universal ribosomal protein uL6 family. Part of the 50S ribosomal subunit.

This protein binds to the 23S rRNA, and is important in its secondary structure. It is located near the subunit interface in the base of the L7/L12 stalk, and near the tRNA binding site of the peptidyltransferase center. This is Large ribosomal subunit protein uL6 from Clostridium botulinum (strain 657 / Type Ba4).